A 691-amino-acid polypeptide reads, in one-letter code: Pentatricopeptide repeat-containing protein At4g37170 (691 aa).

12 PPR repeats span residues 84 to 118, 119 to 149, 150 to 184, 185 to 211, 217 to 251, 252 to 286, 287 to 317, 318 to 352, 353 to 383, 384 to 418, 419 to 449, and 455 to 485; these read PASTYCNLIQVCSQTRALEEGKKVHEHIRTSGFVP, GIVIWNRLLRMYAKCGSLVDARKVFDEMPNR, DLCSWNVMVNGYAEVGLLEEARKLFDEMTEKDSYS, WTAMVTGYVKKDQPEEALVLYSLMQRV, NIFTVSIAVAAAAAVKCIRRGKEIHGHIVRAGLDS, DEVLWSSLMDMYGKCGCIDEARNIFDKIVEKDVVS, WTSMIDRYFKSSRWREGFSLFSELVGSCERP, NEYTFAGVLNACADLTTEELGKQVHGYMTRVGFDP, YSFASSSLVDMYTKCGNIESAKHVVDGCPKP, DLVSWTSLIGGCAQNGQPDEALKYFDLLLKSGTKP, DHVTFVNVLSACTHAGLVEKGLEFFYSITEK, and TSDHYTCLVDLLARSGRFEQLKSVISEMPMK. Residues 490–565 form a type E motif region; the sequence is LWASVLGGCS…RPGSSWTEIK (76 aa). The tract at residues 566–596 is type E(+) motif; sequence RKRHVFIAADTSHPMYNQIVEFLRELRKKMK. The tract at residues 597-691 is type DYW motif; the sequence is EEGYVPATSL…NGQCSCGDYW (95 aa).

It belongs to the PPR family. PCMP-H subfamily.

The protein is Pentatricopeptide repeat-containing protein At4g37170 (PCMP-H5) of Arabidopsis thaliana (Mouse-ear cress).